A 120-amino-acid polypeptide reads, in one-letter code: Ribonuclease P protein component (120 aa).

This sequence belongs to the RnpA family. In terms of assembly, consists of a catalytic RNA component (M1 or rnpB) and a protein subunit.

It carries out the reaction Endonucleolytic cleavage of RNA, removing 5'-extranucleotides from tRNA precursor.. Functionally, RNaseP catalyzes the removal of the 5'-leader sequence from pre-tRNA to produce the mature 5'-terminus. It can also cleave other RNA substrates such as 4.5S RNA. The protein component plays an auxiliary but essential role in vivo by binding to the 5'-leader sequence and broadening the substrate specificity of the ribozyme. The chain is Ribonuclease P protein component from Rickettsia bellii (strain RML369-C).